Consider the following 133-residue polypeptide: ATP synthase epsilon chain, chloroplastic (133 aa).

The protein belongs to the ATPase epsilon chain family. F-type ATPases have 2 components, CF(1) - the catalytic core - and CF(0) - the membrane proton channel. CF(1) has five subunits: alpha(3), beta(3), gamma(1), delta(1), epsilon(1). CF(0) has three main subunits: a, b and c.

The protein resides in the plastid. It localises to the chloroplast thylakoid membrane. Functionally, produces ATP from ADP in the presence of a proton gradient across the membrane. This is ATP synthase epsilon chain, chloroplastic from Eucalyptus globulus subsp. globulus (Tasmanian blue gum).